Reading from the N-terminus, the 534-residue chain is 5,6-dihydroxyindole-2-carboxylic acid oxidase (534 aa).

A signal peptide spans Met1–Ala23. Residues Gln24–Glu477 are Lumenal, melanosome-facing. Disulfide bonds link Cys29-Cys40, Cys41-Cys65, Cys56-Cys99, Cys101-Cys110, and Cys113-Cys122. 2 N-linked (GlcNAc...) asparagine glycosylation sites follow: Asn96 and Asn104. N-linked (GlcNAc...) asparagine glycans are attached at residues Asn175 and Asn181. The Zn(2+) site is built by His192, His215, and His224. Disulfide bonds link Cys258/Cys261 and Cys290/Cys303. 2 N-linked (GlcNAc...) asparagine glycosylation sites follow: Asn304 and Asn350. Zn(2+) is bound by residues His377 and His381. Asn385 carries an N-linked (GlcNAc...) asparagine glycan. His404 contacts Zn(2+). The chain crosses the membrane as a helical span at residues Ile478 to Val501. At His502–Val534 the chain is on the cytoplasmic side.

This sequence belongs to the tyrosinase family. It depends on Cu(2+) as a cofactor. Zn(2+) is required as a cofactor.

The protein localises to the melanosome membrane. It catalyses the reaction 2 5,6-dihydroxyindole-2-carboxylate + O2 = 2 indole-5,6-quinone-2-carboxylate + 2 H2O. It participates in pigment biosynthesis; melanin biosynthesis. Plays a role in melanin biosynthesis. Catalyzes the oxidation of 5,6-dihydroxyindole-2-carboxylic acid (DHICA) into indole-5,6-quinone-2-carboxylic acid. May regulate or influence the type of melanin synthesized. Also to a lower extent, capable of hydroxylating tyrosine and producing melanin. The chain is 5,6-dihydroxyindole-2-carboxylic acid oxidase (TYRP1) from Ambystoma mexicanum (Axolotl).